The following is a 92-amino-acid chain: Transcription factor ILI6 (92 aa).

The disordered stretch occupies residues 1 to 20 (MSSRRSRSRQSGSSRITDEQ). The 55-residue stretch at 5 to 59 (RSRSRQSGSSRITDEQISDLVSKLQDLLPEARLRSNDRVPSSRVLQETCNYIRSL) folds into the bHLH domain.

This sequence belongs to the bHLH protein family. In terms of assembly, interacts with APG.

The protein localises to the nucleus. Its function is as follows. Atypical and probable non DNA-binding bHLH transcription factor that acts as a positive regulator of grain size. Binds the transcription repressor APG and forms a heterodimer of antagonistic bHLH transcription factors that regulates grain length and weight by controlling cell elongation in lemma and palea. May be involved in the control of lamina inclination through brassinosteroid signaling pathway. The protein is Transcription factor ILI6 (ILI6) of Oryza sativa subsp. indica (Rice).